Consider the following 249-residue polypeptide: Probable transcriptional regulatory protein Csal_1845 (249 aa).

The protein belongs to the TACO1 family.

Its subcellular location is the cytoplasm. The protein is Probable transcriptional regulatory protein Csal_1845 of Chromohalobacter salexigens (strain ATCC BAA-138 / DSM 3043 / CIP 106854 / NCIMB 13768 / 1H11).